Consider the following 255-residue polypeptide: Octanoyltransferase (255 aa).

Residues 54-238 enclose the BPL/LPL catalytic domain; sequence GDAAELVWLL…AFTEIFGATV (185 aa). Residues 92-99, 167-169, and 180-182 contribute to the substrate site; these read RGGQLTYH, AIG, and GIA. Cysteine 198 (acyl-thioester intermediate) is an active-site residue.

Belongs to the LipB family.

Its subcellular location is the cytoplasm. It catalyses the reaction octanoyl-[ACP] + L-lysyl-[protein] = N(6)-octanoyl-L-lysyl-[protein] + holo-[ACP] + H(+). It functions in the pathway protein modification; protein lipoylation via endogenous pathway; protein N(6)-(lipoyl)lysine from octanoyl-[acyl-carrier-protein]: step 1/2. Catalyzes the transfer of endogenously produced octanoic acid from octanoyl-acyl-carrier-protein onto the lipoyl domains of lipoate-dependent enzymes. Lipoyl-ACP can also act as a substrate although octanoyl-ACP is likely to be the physiological substrate. This chain is Octanoyltransferase, found in Rhodopseudomonas palustris (strain HaA2).